A 148-amino-acid polypeptide reads, in one-letter code: Vascular endothelial growth factor homolog (148 aa).

Positions 1–25 are cleaved as a signal peptide; it reads MKLTATLQVVVALLICMYNLPECVS. 3 disulfide bridges follow: Cys-46/Cys-88, Cys-77/Cys-130, and Cys-81/Cys-132. The N-linked (GlcNAc...) asparagine; by host glycan is linked to Asn-95.

This sequence belongs to the PDGF/VEGF growth factor family. In terms of assembly, homodimer; disulfide-linked.

It localises to the secreted. In terms of biological role, induces endothelial proliferation. In Orf virus (strain NZ7) (OV NZ-7), this protein is Vascular endothelial growth factor homolog.